We begin with the raw amino-acid sequence, 428 residues long: Synaptotagmin-1 (428 aa).

The Vesicular segment spans residues 1–67; the sequence is MDSLLARVKR…KDKLINEIEN (67 aa). The tract at residues 16-50 is disordered; that stretch reads ALNPAQEGVTGGPDAAGLPDVSTSSPGGGGAGDKL. The helical transmembrane segment at 68–92 threads the bilayer; the sequence is LPIWAIVLIIAGSLLFLVCCVYCVC. Topologically, residues 93 to 428 are cytoplasmic; it reads RRSCRKRKKK…HTLQEVPEKN (336 aa). Ser-123 is subject to Phosphoserine; by PRKC2. The interval 147 to 395 is phospholipid binding; the sequence is STKSEVKLGK…PIGRCVLGCN (249 aa). 2 consecutive C2 domains span residues 153–272 and 286–419; these read KLGK…EDWK and KLGD…AQWH. Ca(2+)-binding residues include Asp-184, Asp-190, Asp-242, Phe-243, Asp-244, Ser-247, Lys-248, Asp-250, Asp-317, Asp-323, Asp-377, and Asp-379.

Belongs to the synaptotagmin family. As to quaternary structure, binds SNAP25. Isoform 3 binds SNAP25 with higher affinity. It depends on Ca(2+) as a cofactor.

It localises to the cytoplasmic vesicle. The protein localises to the secretory vesicle. Its subcellular location is the synaptic vesicle membrane. The protein resides in the synapse. Its function is as follows. Acts as inhibitor of neurotransmitter release. Overexpression leads to a decrease in the amplitude of the excitatory postsynaptic potential in dissected cholinergic and glutaminergic neurons while depletion with antisense oligonucleotides leads to an increase. Overexpression of isoform 1 blocks the reversal of synaptic depression by serotonin in sensory neurons. In Aplysia californica (California sea hare), this protein is Synaptotagmin-1 (SYT1).